The following is a 1239-amino-acid chain: DNA polymerase subunit gamma-1 (1239 aa).

The disordered stretch occupies residues 1-68 (MSRLLWRKVA…PQVLSSEGGQ (68 aa)). Low complexity-rich tracts occupy residues 9-36 (VAGATVGPGPVPAPGRWVSSSVPASDPS) and 44-60 (QQQQQQQQQQQQPQQPQ). Positions 43–55 (QQQQQQQQQQQQQ) are does not contribute to polymerase and exonuclease enzymatic activities. Residues 196 to 200 (VFDVE) carry the Exo I motif. Catalysis depends on aspartate 198, which acts as the Exonuclease activity. Residues 267-275 (VGHNVSFDR) carry the Exo II motif. Residue serine 306 coordinates DNA. Residues 318 to 340 (GKHKVQPPTKQGQKSQRKARRGP) are disordered. The short motif at 395–403 (YCAQDVWAT) is the Exo III element. The segment at 506 to 531 (EPATASKLPIEGAGAPGDPMDQEDLG) is disordered. The interval 510-571 (ASKLPIEGAG…RPQHLPGHPG (62 aa)) is accessory-interacting determinant. Arginine 579 contributes to the RNA binding site. Residue serine 593 participates in DNA binding. 3 residues coordinate RNA: histidine 754, glycine 763, and lysine 768. 2 residues coordinate DNA: lysine 806 and threonine 849. The trigger loop stretch occupies residues 858-864 (TWLTASN). Residues serine 863 and arginine 869 each coordinate RNA. Positions 887–896 (VGADVDSQEL) match the Pol A motif. Positions 890, 891, 893, 895, 943, 947, and 951 each coordinate a 2'-deoxyribonucleoside 5'-triphosphate. Mg(2+) contacts are provided by aspartate 890 and valine 891. The Pol B signature appears at 943-958 (REHAKIFNYGRIYGAG). The DNA site is built by threonine 1094 and serine 1095. The Pol C signature appears at 1134-1141 (HDEVRYLV). Residue aspartate 1135 participates in a 2'-deoxyribonucleoside 5'-triphosphate binding. Residue aspartate 1135 participates in Mg(2+) binding.

Belongs to the DNA polymerase type-A family. As to quaternary structure, heterotrimer composed of a catalytic subunit and a homodimer of accessory subunits (POLG:POLG2). Interacts with TTC3. Interacts with LIG3. Mg(2+) serves as cofactor.

Its subcellular location is the mitochondrion. The protein resides in the mitochondrion matrix. The protein localises to the mitochondrion nucleoid. The catalysed reaction is DNA(n) + a 2'-deoxyribonucleoside 5'-triphosphate = DNA(n+1) + diphosphate. It catalyses the reaction a 3'-end 2'-deoxyribonucleotidyl-deoxyribonucleotide-DNA + H2O = a 3'-end 2'-deoxyribonucleotide-DNA + a 2'-deoxyribonucleoside 5'-phosphate + H(+). It carries out the reaction a 5'-end 2'-deoxyribose-2'-deoxyribonucleotide-DNA = (2E,4S)-4-hydroxypenten-2-al-5-phosphate + a 5'-end 5'-phospho-2'-deoxyribonucleoside-DNA + H(+). Inhibited by dideoxynucleotides such as antiviral agent zalcitabine. Its function is as follows. Catalytic subunit of DNA polymerase gamma solely responsible for replication of mitochondrial DNA (mtDNA). Replicates both heavy and light strands of the circular mtDNA genome using a single-stranded DNA template, RNA primers and the four deoxyribonucleoside triphosphates as substrates. Has 5' -&gt; 3' polymerase activity. Functionally interacts with TWNK and SSBP1 at the replication fork to form a highly processive replisome, where TWNK unwinds the double-stranded DNA template prior to replication and SSBP1 covers the parental heavy strand to enable continuous replication of the entire mitochondrial genome. A single nucleotide incorporation cycle includes binding of the incoming nucleotide at the insertion site, a phosphodiester bond formation reaction that extends the 3'-end of the primer DNA, and translocation of the primer terminus to the post-insertion site. After completing replication of a mtDNA strand, mediates 3' -&gt; 5' exonucleolytic degradation at the nick to enable proper ligation. Highly accurate due to high nucleotide selectivity and 3' -&gt; 5' exonucleolytic proofreading. Proficiently corrects base substitutions, single-base additions and deletions in non-repetitive sequences and short repeats, but displays lower proofreading activity when replicating longer homopolymeric stretches. Exerts exonuclease activity toward single-stranded DNA and double-stranded DNA containing 3'-terminal mispairs. When a misincorporation occurs, transitions from replication to a pro-nucleolytic editing mode and removes the missincorporated nucleoside in the exonuclease active site. Proceeds via an SN2 nucleolytic mechanism in which Asp-198 catalyzes phosphodiester bond hydrolysis and Glu-200 stabilizes the leaving group. As a result the primer strand becomes one nucleotide shorter and is positioned in the post-insertion site, ready to resume DNA synthesis. Exerts 5'-deoxyribose phosphate (dRP) lyase activity and mediates repair-associated mtDNA synthesis (gap filling) in base-excision repair pathway. Catalyzes the release of the 5'-terminal 2-deoxyribose-5-phosphate sugar moiety from incised apurinic/apyrimidinic (AP) sites to produce a substrate for DNA ligase. The dRP lyase reaction does not require divalent metal ions and likely proceeds via a Schiff base intermediate in a beta-elimination reaction mechanism. This is DNA polymerase subunit gamma-1 from Homo sapiens (Human).